The following is a 179-amino-acid chain: MSSRVLTPDVVGIDALVQDHQTVLAKAEGGVVAVFANNAPAFYAVTPARLAELLALEEKLARPGSDVALDDQLYQEPQAAPVAVPMGKFAMYPDWQPDADFIRLAALWGVALREPVTTEELASFIAYWQAEGKVFHHVQWQQKLARSLQIGRASNGGLPKRDVNTVSEPDSQIPPGFRG.

Residues 156-179 (GGLPKRDVNTVSEPDSQIPPGFRG) are disordered.

Belongs to the DnaT family. As to quaternary structure, homooligomerizes. Interacts with PriB. Component of the replication restart primosome. Primosome assembly occurs via a 'hand-off' mechanism. PriA binds to replication forks, subsequently PriB then DnaT bind; DnaT then displaces ssDNA to generate the helicase loading substrate.

Functionally, involved in the restart of stalled replication forks, which reloads the replicative helicase on sites other than the origin of replication. Can function in multiple replication restart pathways. Displaces ssDNA from a PriB-ssDNA complex. Probably forms a spiral filament on ssDNA. The polypeptide is Replication restart protein DnaT (Escherichia coli (strain ATCC 8739 / DSM 1576 / NBRC 3972 / NCIMB 8545 / WDCM 00012 / Crooks)).